Reading from the N-terminus, the 96-residue chain is Small ribosomal subunit protein bS6 (96 aa).

It belongs to the bacterial ribosomal protein bS6 family.

In terms of biological role, binds together with bS18 to 16S ribosomal RNA. The protein is Small ribosomal subunit protein bS6 of Bacillus mycoides (strain KBAB4) (Bacillus weihenstephanensis).